Here is a 950-residue protein sequence, read N- to C-terminus: Translation initiation factor IF-2 (950 aa).

Basic and acidic residues-rich tracts occupy residues 128–158 (KPKVAEPVKKSEPKAAAKAEETKVEKVEAKA), 165–186 (AEVKTENVADKKEPVVTEEKKK), 200–234 (KRAEDIKKEQAAARPEKKKFDKNRNDRNNRNDNRR), and 291–312 (NRRDRDRKKTDSNRDNTKDGNR). The tract at residues 128–354 (KPKVAEPVKK…NNQSSSVPAT (227 aa)) is disordered. Composition is skewed to polar residues over residues 322–336 (NRNQVRNARNSNWNQ) and 343–353 (YQNNQSSSVPA). One can recognise a tr-type G domain in the interval 448 to 619 (ERPAVVTIMG…LLVAEVQELK (172 aa)). The segment at 457 to 464 (GHVDHGKT) is G1. 457–464 (GHVDHGKT) is a binding site for GTP. The tract at residues 482–486 (GITQH) is G2. The G3 stretch occupies residues 503-506 (DTPG). Residues 503 to 507 (DTPGH) and 557 to 560 (NKID) each bind GTP. Residues 557 to 560 (NKID) form a G4 region. The interval 595–597 (SAK) is G5.

It belongs to the TRAFAC class translation factor GTPase superfamily. Classic translation factor GTPase family. IF-2 subfamily.

Its subcellular location is the cytoplasm. Its function is as follows. One of the essential components for the initiation of protein synthesis. Protects formylmethionyl-tRNA from spontaneous hydrolysis and promotes its binding to the 30S ribosomal subunits. Also involved in the hydrolysis of GTP during the formation of the 70S ribosomal complex. The polypeptide is Translation initiation factor IF-2 (Lactococcus lactis subsp. cremoris (strain MG1363)).